The sequence spans 725 residues: Sodium/hydrogen exchanger 7 (725 aa).

Residues 1–20 are disordered; sequence MEPGDAARPGSGRATGAPPP. The Cytoplasmic portion of the chain corresponds to 1–21; sequence MEPGDAARPGSGRATGAPPPR. A helical membrane pass occupies residues 22 to 42; it reads LLLLPLLLGWGLRVAAAASAS. Residues 43–70 lie on the Lumenal side of the membrane; the sequence is SSGAAAEDSSAMEELATEKEAEESHRQD. The helical transmembrane segment at 71–91 threads the bilayer; that stretch reads SVSLLTFILLLTLTILTIWLF. The Cytoplasmic portion of the chain corresponds to 92–95; that stretch reads KHRR. A helical transmembrane segment spans residues 96 to 116; it reads VRFLHETGLAMIYGLIVGVIL. The Lumenal portion of the chain corresponds to 117-175; the sequence is RYGTPATSGRDKSLSCTQEDRAFSTLLVNVSGKFFEYTLKGEISPGKINSVEQNDMLRK. N-linked (GlcNAc...) asparagine glycosylation occurs at Asn-145. Residues 176-196 form a helical membrane-spanning segment; sequence VTFDPEVFFNILLPPIIFHAG. The Cytoplasmic portion of the chain corresponds to 197-210; that stretch reads YSLKKRHFFRNLGS. Residues 211–231 traverse the membrane as a helical segment; it reads ILAYAFLGTAVSCFIIGNLMY. Over 232–251 the chain is Lumenal; sequence GVVKLMKIMGQLSDKFYYTD. A helical transmembrane segment spans residues 252–272; the sequence is CLFFGAIISATDPVTVLAIFN. Residues 273-277 are Cytoplasmic-facing; sequence ELHAD. Residues 278–298 form a helical membrane-spanning segment; sequence VDLYALLFGESVLNDAVAIVL. Over 299-322 the chain is Lumenal; sequence SSSIVAYQPAGLNTHAFDAAAFFK. The chain crosses the membrane as a helical span at residues 323 to 343; the sequence is SVGIFLGIFSGSFTMGAVTGV. Residues 344-349 lie on the Cytoplasmic side of the membrane; that stretch reads NANVTK. Helical transmembrane passes span 350–370 and 371–391; these read FTKL…MSWS and TFLL…FCGI. At 392-414 the chain is on the cytoplasmic side; it reads TQAHYTYNNLSVESRSRTKQLFE. A helical transmembrane segment spans residues 415–435; sequence VLHFLAENFIFSYMGLALFTF. Topologically, residues 436-442 are lumenal; sequence QKHVFSP. Residues 443-463 form a helical membrane-spanning segment; that stretch reads IFIIGAFVAIFLGRAAHIYPL. The Cytoplasmic portion of the chain corresponds to 464–474; the sequence is SFFLNLGRRHK. Residues 475–497 form a helical membrane-spanning segment; the sequence is IGWNFQHMMMFSGLRGAMAFALA. Over 498 to 513 the chain is Lumenal; that stretch reads IRDTASYARQMMFTTT. A helical transmembrane segment spans residues 514–534; it reads LLIVFFTVWIIGGGTTPMLSW. Required for trans-Golgi network localization stretches follow at residues 533–559 and 563–568; these read SWLN…YFRV and PDQDPP. Topologically, residues 535–725 are cytoplasmic; the sequence is LNIRVGVEEP…RLVFPLEDNA (191 aa). A Phosphoserine modification is found at Ser-545. 2 disordered regions span residues 567–590 and 669–714; these read PPPN…GNRT and TVTA…SSRG. A compositionally biased stretch (low complexity) spans 675 to 684; that stretch reads SSSSHTASTS. Positions 687–704 are enriched in basic and acidic residues; that stretch reads GSRRTKSSSEEVLERDLG.

This sequence belongs to the monovalent cation:proton antiporter 1 (CPA1) transporter (TC 2.A.36) family. Interacts with SCAMP1, SCAMP2 and SCAMP5; may participate in its shuttling from trans-Golgi network to recycling endosomes. Post-translationally, N-glycosylated. Ubiquitously expressed.

The protein resides in the golgi apparatus. It localises to the trans-Golgi network membrane. The protein localises to the recycling endosome membrane. It is found in the cell membrane. The catalysed reaction is Na(+)(in) + H(+)(out) = Na(+)(out) + H(+)(in). It catalyses the reaction K(+)(in) + H(+)(out) = K(+)(out) + H(+)(in). With respect to regulation, inhibited by benzamil and quinine but not by amiloride. Functionally, golgi Na(+), K(+)/(H+) antiporter. Mediates the electoneutral influx of Na(+) or K(+) in exchange for H(+). May contribute to the regulation of Golgi apparatus volume and pH. This chain is Sodium/hydrogen exchanger 7 (SLC9A7), found in Homo sapiens (Human).